A 339-amino-acid polypeptide reads, in one-letter code: Phosphate acyltransferase (339 aa).

It belongs to the PlsX family. As to quaternary structure, homodimer. Probably interacts with PlsY.

The protein localises to the cytoplasm. The enzyme catalyses a fatty acyl-[ACP] + phosphate = an acyl phosphate + holo-[ACP]. Its pathway is lipid metabolism; phospholipid metabolism. Functionally, catalyzes the reversible formation of acyl-phosphate (acyl-PO(4)) from acyl-[acyl-carrier-protein] (acyl-ACP). This enzyme utilizes acyl-ACP as fatty acyl donor, but not acyl-CoA. This Aeromonas salmonicida (strain A449) protein is Phosphate acyltransferase.